We begin with the raw amino-acid sequence, 1064 residues long: Carbamoyl phosphate synthase large chain (1064 aa).

The interval 1-401 (MPKRADIKKI…ALMKAIRSLE (401 aa)) is carboxyphosphate synthetic domain. 12 residues coordinate ATP: R129, R169, G175, G176, K208, I210, E215, G241, I242, H243, Q284, and E298. One can recognise an ATP-grasp 1 domain in the interval 133–327 (KQLMEALKEP…IAKMAAKIAI (195 aa)). Positions 284, 298, and 300 each coordinate Mg(2+). Mn(2+)-binding residues include Q284, E298, and N300. Positions 402–546 (IGTFALDDLT…YSTYELENES (145 aa)) are oligomerization domain. The carbamoyl phosphate synthetic domain stretch occupies residues 547–929 (LKEKRPSVLV…ALYKAFVAAG (383 aa)). Residues 671 to 861 (NQVIKKLDLS…LAQLATRVML (191 aa)) form the ATP-grasp 2 domain. Positions 707, 746, 748, 752, 777, 778, 779, 780, 820, and 832 each coordinate ATP. Mg(2+)-binding residues include Q820, E832, and N834. 3 residues coordinate Mn(2+): Q820, E832, and N834. Residues 930 to 1064 (FKVHEHGNVL…VSAINKGDKS (135 aa)) form the MGS-like domain. Residues 930-1064 (FKVHEHGNVL…VSAINKGDKS (135 aa)) form an allosteric domain region.

Belongs to the CarB family. Composed of two chains; the small (or glutamine) chain promotes the hydrolysis of glutamine to ammonia, which is used by the large (or ammonia) chain to synthesize carbamoyl phosphate. Tetramer of heterodimers (alpha,beta)4. Requires Mg(2+) as cofactor. The cofactor is Mn(2+).

The catalysed reaction is hydrogencarbonate + L-glutamine + 2 ATP + H2O = carbamoyl phosphate + L-glutamate + 2 ADP + phosphate + 2 H(+). It carries out the reaction hydrogencarbonate + NH4(+) + 2 ATP = carbamoyl phosphate + 2 ADP + phosphate + 2 H(+). Its pathway is amino-acid biosynthesis; L-arginine biosynthesis; carbamoyl phosphate from bicarbonate: step 1/1. It participates in pyrimidine metabolism; UMP biosynthesis via de novo pathway; (S)-dihydroorotate from bicarbonate: step 1/3. Large subunit of the glutamine-dependent carbamoyl phosphate synthetase (CPSase). CPSase catalyzes the formation of carbamoyl phosphate from the ammonia moiety of glutamine, carbonate, and phosphate donated by ATP, constituting the first step of 2 biosynthetic pathways, one leading to arginine and/or urea and the other to pyrimidine nucleotides. The large subunit (synthetase) binds the substrates ammonia (free or transferred from glutamine from the small subunit), hydrogencarbonate and ATP and carries out an ATP-coupled ligase reaction, activating hydrogencarbonate by forming carboxy phosphate which reacts with ammonia to form carbamoyl phosphate. The polypeptide is Carbamoyl phosphate synthase large chain (Oenococcus oeni (strain ATCC BAA-331 / PSU-1)).